The following is a 60-amino-acid chain: Large ribosomal subunit protein uL30 (60 aa).

This sequence belongs to the universal ribosomal protein uL30 family. Part of the 50S ribosomal subunit.

This Shewanella sp. (strain MR-7) protein is Large ribosomal subunit protein uL30.